We begin with the raw amino-acid sequence, 132 residues long: Small ribosomal subunit protein uS8 (132 aa).

This sequence belongs to the universal ribosomal protein uS8 family. Part of the 30S ribosomal subunit. Contacts proteins S5 and S12.

In terms of biological role, one of the primary rRNA binding proteins, it binds directly to 16S rRNA central domain where it helps coordinate assembly of the platform of the 30S subunit. The protein is Small ribosomal subunit protein uS8 of Lysinibacillus sphaericus (strain C3-41).